The following is a 91-amino-acid chain: Large ribosomal subunit protein uL23c (91 aa).

This sequence belongs to the universal ribosomal protein uL23 family. Part of the 50S ribosomal subunit.

The protein resides in the plastid. It is found in the chloroplast. Its function is as follows. Binds to 23S rRNA. The protein is Large ribosomal subunit protein uL23c (rpl23) of Pinus koraiensis (Korean pine).